The primary structure comprises 567 residues: MSTSVFNRRWAALLLEALTRHGVRHICIAPGSRSTPLTLAAAANPSLVCHTHFDERGLGHLALGLAKASTEPVAVIVTSGTAVANLYPALIEAGLTGERLILLTADRPPELIDCGANQAIRQQGLFASHPTLSVNLPRPTPDISARWLVSTLDSAMAQLQHGALHINCPFAEPLYGGDEQQYADWSASLGDWWQDCHPWLRQTCYPPSLYQPLAQQADWFFWRQKRGVVIAGRMGAEEGRQLTAWAAMLGWPLIGDVLSQTGQPLPCADLWLAHPRAQETLAQAQIVLQFGSSLTSKRLLQWQTACQPQEYWLVDSAPGRLDPANHRGRRIICPVGEWLSRHPAQRRTPWATELAAYSESAQAQVIETLAGQFSEAAVAHQLAELLPDNGQLFVGNSLIIRLIDALGQLPAGYPVYSNRGASGIDGLLSTAAGVQRATAKPTLAIVGDLSALYDLNALALLRQSSAPMVLLVINNNGGQIFSLLPTPEAERQRFYCMPQDVNFEHAAVMFSLGYARPNSWPQLREHVHQCWLRGGTTLIEVQVPPSQGAETLQQLVQQVTLIPQVAP.

It belongs to the TPP enzyme family. MenD subfamily. As to quaternary structure, homodimer. Mg(2+) is required as a cofactor. The cofactor is Mn(2+). It depends on thiamine diphosphate as a cofactor.

It carries out the reaction isochorismate + 2-oxoglutarate + H(+) = 5-enolpyruvoyl-6-hydroxy-2-succinyl-cyclohex-3-ene-1-carboxylate + CO2. It functions in the pathway quinol/quinone metabolism; 1,4-dihydroxy-2-naphthoate biosynthesis; 1,4-dihydroxy-2-naphthoate from chorismate: step 2/7. It participates in quinol/quinone metabolism; menaquinone biosynthesis. In terms of biological role, catalyzes the thiamine diphosphate-dependent decarboxylation of 2-oxoglutarate and the subsequent addition of the resulting succinic semialdehyde-thiamine pyrophosphate anion to isochorismate to yield 2-succinyl-5-enolpyruvyl-6-hydroxy-3-cyclohexene-1-carboxylate (SEPHCHC). The protein is 2-succinyl-5-enolpyruvyl-6-hydroxy-3-cyclohexene-1-carboxylate synthase of Yersinia pseudotuberculosis serotype O:1b (strain IP 31758).